The following is a 151-amino-acid chain: uncharacterized protein (151 aa).

4 helical membrane-spanning segments follow: residues 8–28, 60–80, 82–102, and 113–133; these read GIGS…EFFE, WHVA…GVLT, FSAL…HADS, and LPLI…GKLS.

Belongs to the DoxX family.

It is found in the cell membrane. This is an uncharacterized protein from Haemophilus influenzae (strain ATCC 51907 / DSM 11121 / KW20 / Rd).